An 86-amino-acid chain; its full sequence is Small ribosomal subunit protein bS16 (86 aa).

The protein belongs to the bacterial ribosomal protein bS16 family.

This Carboxydothermus hydrogenoformans (strain ATCC BAA-161 / DSM 6008 / Z-2901) protein is Small ribosomal subunit protein bS16.